We begin with the raw amino-acid sequence, 126 residues long: Large ribosomal subunit protein bL19 (126 aa).

It belongs to the bacterial ribosomal protein bL19 family.

In terms of biological role, this protein is located at the 30S-50S ribosomal subunit interface and may play a role in the structure and function of the aminoacyl-tRNA binding site. This Gluconacetobacter diazotrophicus (strain ATCC 49037 / DSM 5601 / CCUG 37298 / CIP 103539 / LMG 7603 / PAl5) protein is Large ribosomal subunit protein bL19.